Consider the following 283-residue polypeptide: Plasma membrane ascorbate-dependent reductase CYBRD1 (283 aa).

The Cytoplasmic portion of the chain corresponds to 1–5; it reads MEGYK. The chain crosses the membrane as a helical span at residues 6-30; the sequence is SFLVFLVSSLLLGFLGVIFTLVWVL. A Cytochrome b561 domain is found at 13–218; that stretch reads SSLLLGFLGV…FGGLVVWMVT (206 aa). At 31–45 the chain is on the extracellular side; that stretch reads HWREGLGWDGGAAEF. Residues 46 to 67 form a helical membrane-spanning segment; that stretch reads NWHPVLVTSGFIFIQGIAIIVY. Residues histidine 48, arginine 68, and lysine 77 each coordinate heme b. Residues 68-76 are Cytoplasmic-facing; that stretch reads RLPWTWNCS. Residues lysine 77 and lysine 81 each coordinate L-ascorbate. The helical transmembrane segment at 77 to 103 threads the bilayer; that stretch reads KLLMKFIHAGLHLTAFVFTIVALVAVF. Histidine 84 contacts heme b. Topologically, residues 104-116 are extracellular; the sequence is DFHNAKNIPNMYS. Residue histidine 106 coordinates Fe(3+). Residues 113 to 116 and histidine 118 contribute to the heme b site; that span reads NMYS. A helical membrane pass occupies residues 117–142; it reads LHSWIGLTVVILYALQLVLGVSIYLL. Topologically, residues 143-149 are cytoplasmic; sequence PFARDTL. Residue arginine 150 participates in L-ascorbate binding. Residues 150 to 177 form a helical membrane-spanning segment; that stretch reads RAALMPVHVYSGLLIFGTVIATALMGIT. Residues histidine 157 and glutamate 178 each coordinate heme b. The Extracellular segment spans residues 178–195; that stretch reads EKLIFSLKEPPYSKMPPE. A helical membrane pass occupies residues 196-220; sequence AIFVNTFGLIILVFGGLVVWMVTTP. The Cytoplasmic portion of the chain corresponds to 221 to 283; that stretch reads AWKRPREQEI…LDDAGQRSTM (63 aa). Lysine 223 serves as a coordination point for heme b. Positions 234-263 are disordered; it reads NPTVSSPDGTEEGSTITDCSNTEKSDVELN. The span at 235–253 shows a compositional bias: polar residues; that stretch reads PTVSSPDGTEEGSTITDCS. The span at 254–263 shows a compositional bias: basic and acidic residues; it reads NTEKSDVELN.

Homodimer. The cofactor is heme b.

It is found in the cell membrane. Its subcellular location is the apical cell membrane. It catalyses the reaction Fe(3+)(out) + L-ascorbate(in) = monodehydro-L-ascorbate radical(in) + Fe(2+)(out) + H(+). The enzyme catalyses Cu(2+)(out) + L-ascorbate(in) = Cu(+)(out) + monodehydro-L-ascorbate radical(in) + H(+). The catalysed reaction is monodehydro-L-ascorbate radical(out) + L-ascorbate(in) = monodehydro-L-ascorbate radical(in) + L-ascorbate(out). Plasma membrane reductase that uses cytoplasmic ascorbate as an electron donor to reduce extracellular Fe(3+) into Fe(2+). It is also able to reduce extracellular monodehydro-L-ascorbate and may be involved in extracellular ascorbate regeneration. May also function as a cupric transmembrane reductase. This chain is Plasma membrane ascorbate-dependent reductase CYBRD1 (cybrd1), found in Xenopus tropicalis (Western clawed frog).